A 183-amino-acid chain; its full sequence is Holliday junction branch migration complex subunit RuvA (183 aa).

The domain I stretch occupies residues 1–63 (MIVGLIGVVE…EDAHLLYGFL (63 aa)). Residues 64 to 139 (EESEKILFER…FFIQDENRPA (76 aa)) form a domain II region. Residue Ala-139 is a region of interest, flexible linker. A domain III region spans residues 139 to 183 (ARNEVFLALESLGFKSAEINPVLKTLKPHLSIEAAIKEALQQLRS).

This sequence belongs to the RuvA family. In terms of assembly, homotetramer. Forms an RuvA(8)-RuvB(12)-Holliday junction (HJ) complex. HJ DNA is sandwiched between 2 RuvA tetramers; dsDNA enters through RuvA and exits via RuvB. An RuvB hexamer assembles on each DNA strand where it exits the tetramer. Each RuvB hexamer is contacted by two RuvA subunits (via domain III) on 2 adjacent RuvB subunits; this complex drives branch migration. In the full resolvosome a probable DNA-RuvA(4)-RuvB(12)-RuvC(2) complex forms which resolves the HJ.

The protein resides in the cytoplasm. Its function is as follows. The RuvA-RuvB-RuvC complex processes Holliday junction (HJ) DNA during genetic recombination and DNA repair, while the RuvA-RuvB complex plays an important role in the rescue of blocked DNA replication forks via replication fork reversal (RFR). RuvA specifically binds to HJ cruciform DNA, conferring on it an open structure. The RuvB hexamer acts as an ATP-dependent pump, pulling dsDNA into and through the RuvAB complex. HJ branch migration allows RuvC to scan DNA until it finds its consensus sequence, where it cleaves and resolves the cruciform DNA. This is Holliday junction branch migration complex subunit RuvA from Helicobacter pylori (strain J99 / ATCC 700824) (Campylobacter pylori J99).